Consider the following 210-residue polypeptide: Thymidylate kinase (210 aa).

10–17 (GPEGAGKS) lines the ATP pocket.

The protein belongs to the thymidylate kinase family.

The enzyme catalyses dTMP + ATP = dTDP + ADP. Phosphorylation of dTMP to form dTDP in both de novo and salvage pathways of dTTP synthesis. This Pseudomonas fluorescens (strain ATCC BAA-477 / NRRL B-23932 / Pf-5) protein is Thymidylate kinase.